The primary structure comprises 284 residues: Homeobox protein six1 (284 aa).

The segment at residues Gly-124–Glu-183 is a DNA-binding region (homeobox). Residues Val-168–Ser-230 are disordered. The segment covering Asp-179–Thr-190 has biased composition (basic and acidic residues). A compositionally biased stretch (low complexity) spans Glu-191 to Gln-202.

The protein belongs to the SIX/Sine oculis homeobox family.

Its subcellular location is the nucleus. It localises to the cytoplasm. Functionally, transcription factor that is involved in the regulation of cell proliferation, apoptosis and embryonic development. Depending on context, functions as a transcriptional repressor or activator. Required for the normal formation of pre-placodal ectoderm. In Xenopus laevis (African clawed frog), this protein is Homeobox protein six1 (six1).